The chain runs to 109 residues: Spermidine export protein MdtI (109 aa).

Transmembrane regions (helical) follow at residues 6-26, 36-56, 64-84, and 88-108; these read WIHA…NVFL, VYGI…SQAV, AYAL…WVLF, and LNNK…LIKL.

Belongs to the drug/metabolite transporter (DMT) superfamily. Small multidrug resistance (SMR) (TC 2.A.7.1) family. MdtI subfamily. In terms of assembly, forms a complex with MdtJ.

The protein localises to the cell inner membrane. In terms of biological role, catalyzes the excretion of spermidine. This chain is Spermidine export protein MdtI, found in Klebsiella pneumoniae (strain 342).